The chain runs to 72 residues: Small proline-rich protein 2A (72 aa).

Positions 1-11 (MSYQQQQCKQP) are enriched in low complexity. A disordered region spans residues 1–20 (MSYQQQQCKQPCQPPPVCPT). 3 consecutive repeat copies span residues 21–29 (PKCPEPCPP), 30–38 (PKCPEPCPP), and 39–47 (PKCPQPCPP). The interval 21–47 (PKCPEPCPPPKCPEPCPPPKCPQPCPP) is 3 X 9 AA tandem repeats of P-K-C-P-[EQ]-P-C-P-P. The disordered stretch occupies residues 42 to 72 (PQPCPPQQCQQKYPPVTPSPPCQSKYPPKSK).

Belongs to the cornifin (SPRR) family. Forms five pairs of intrachain disulfide bonds. As to expression, expressed in intestine; selectively expressed in goblet cells.

It is found in the secreted. The protein localises to the extracellular space. Its subcellular location is the cytoplasmic vesicle. The protein resides in the secretory vesicle. Functionally, gut bactericidal protein that selectively kills Gram-positive bacteria by binding to negatively charged lipids on bacterial membranes, leading to bacterial membrane permeabilization and disruption. Specifically binds lipids bearing negatively charged headgroups, such as phosphatidic acid, phosphatidylserine (PS), cardiolipin (CL), and phosphatidylinositol phosphates, but not to zwitterionic or neutral lipids. Induced by type-2 cytokines in response to helminth infection and is required to protect against helminth-induced bacterial invasion of intestinal tissue. May also be involved in the development of the cornified envelope of squamous epithelia; however, additional evidences are required to confirm this result in vivo. The protein is Small proline-rich protein 2A of Homo sapiens (Human).